Here is a 394-residue protein sequence, read N- to C-terminus: MIEKIQKFLKLEAAGGILLLIAALLAMLCANSVFSPYYFEFLQTQVAVKLGAFSIDKPLLMWINDGFMAVFFILVGMEVKRELLEGSLSSYQKAIFPAFAAIGGMVVPALIYWFINRDYPEYQQGWAIPMATDIAFALGIVALLSKQVPATLKVFLLALAIIDDIGAIIVIALFFSNELSMLALIIASIAIMILITMNRYKVTGIIHYVIVGTILWASVLKSGVHATLAGVIIGFCIPLRGKKGETPLHDLEHTLAPWCAFAILPLFAFSNAGVSLAGMSLAKLTSPLPLGITLGLLIGKPVGVFSFCYLAVRAGLAKLPEGINFKQVFAIAVLCGIGFTMSVFIAGLSFGEEHPDETILALSRLGILIGTSIAAIVGYILLKKTTNKPLVQAG.

The next 11 helical transmembrane spans lie at 14–34 (AGGILLLIAALLAMLCANSVF), 59–79 (LLMWINDGFMAVFFILVGMEV), 95–115 (IFPAFAAIGGMVVPALIYWFI), 125–145 (GWAIPMATDIAFALGIVALLS), 155–175 (FLLALAIIDDIGAIIVIALFF), 177–197 (NELSMLALIIASIAIMILITM), 204–224 (GIIHYVIVGTILWASVLKSGV), 258–278 (WCAFAILPLFAFSNAGVSLAG), 292–312 (ITLGLLIGKPVGVFSFCYLAV), 328–348 (VFAIAVLCGIGFTMSVFIAGL), and 362–382 (LSRLGILIGTSIAAIVGYILL).

This sequence belongs to the NhaA Na(+)/H(+) (TC 2.A.33) antiporter family.

It is found in the cell inner membrane. The enzyme catalyses Na(+)(in) + 2 H(+)(out) = Na(+)(out) + 2 H(+)(in). Its function is as follows. Na(+)/H(+) antiporter that extrudes sodium in exchange for external protons. This chain is Na(+)/H(+) antiporter NhaA, found in Haemophilus ducreyi (strain 35000HP / ATCC 700724).